We begin with the raw amino-acid sequence, 335 residues long: Non-structural protein P9-1 (335 aa).

Residues 27-42 show a composition bias toward low complexity; that stretch reads FNANTKNQNQNTSNTQ. Positions 27 to 48 are disordered; that stretch reads FNANTKNQNQNTSNTQSSGGIT.

The chain is Non-structural protein P9-1 (S9) from Fiji disease virus (isolate Sugarcane) (FDV).